We begin with the raw amino-acid sequence, 398 residues long: Serpin-Z1A (398 aa).

The segment at Gly-343 to Phe-367 is RCL.

This sequence belongs to the serpin family.

In terms of biological role, inhibits chymotrypsin and cathepsin G in vitro. This chain is Serpin-Z1A (WZCI), found in Triticum aestivum (Wheat).